The following is a 649-amino-acid chain: 1-deoxy-D-xylulose-5-phosphate synthase 1 (649 aa).

Thiamine diphosphate contacts are provided by residues H79 and 120–122 (AHS). Mg(2+) is bound at residue D151. Thiamine diphosphate is bound by residues 152–153 (GS), N180, Y289, and E371. N180 contacts Mg(2+).

This sequence belongs to the transketolase family. DXPS subfamily. Homodimer. The cofactor is Mg(2+). Thiamine diphosphate serves as cofactor.

The catalysed reaction is D-glyceraldehyde 3-phosphate + pyruvate + H(+) = 1-deoxy-D-xylulose 5-phosphate + CO2. It functions in the pathway metabolic intermediate biosynthesis; 1-deoxy-D-xylulose 5-phosphate biosynthesis; 1-deoxy-D-xylulose 5-phosphate from D-glyceraldehyde 3-phosphate and pyruvate: step 1/1. Functionally, catalyzes the acyloin condensation reaction between C atoms 2 and 3 of pyruvate and glyceraldehyde 3-phosphate to yield 1-deoxy-D-xylulose-5-phosphate (DXP). This is 1-deoxy-D-xylulose-5-phosphate synthase 1 from Zymomonas mobilis subsp. mobilis (strain ATCC 31821 / ZM4 / CP4).